Consider the following 316-residue polypeptide: Mycothiol acetyltransferase (316 aa).

N-acetyltransferase domains lie at 16-153 and 156-316; these read REVR…VPAV and VRIR…PAAN. Glu-36 lines the 1D-myo-inositol 2-(L-cysteinylamino)-2-deoxy-alpha-D-glucopyranoside pocket. Acetyl-CoA is bound by residues 83–85 and 91–96; these read LVV and RRGIGS. 1D-myo-inositol 2-(L-cysteinylamino)-2-deoxy-alpha-D-glucopyranoside is bound by residues Glu-183, Lys-228, and Glu-238. Acetyl-CoA contacts are provided by residues 242-244 and 249-255; these read VGV and QGRGLGQ. Tyr-283 contributes to the 1D-myo-inositol 2-(L-cysteinylamino)-2-deoxy-alpha-D-glucopyranoside binding site. Position 288 to 293 (288 to 293) interacts with acetyl-CoA; the sequence is NVAAVR.

The protein belongs to the acetyltransferase family. MshD subfamily. In terms of assembly, monomer.

It carries out the reaction 1D-myo-inositol 2-(L-cysteinylamino)-2-deoxy-alpha-D-glucopyranoside + acetyl-CoA = mycothiol + CoA + H(+). In terms of biological role, catalyzes the transfer of acetyl from acetyl-CoA to desacetylmycothiol (Cys-GlcN-Ins) to form mycothiol. The polypeptide is Mycothiol acetyltransferase (Mycolicibacterium paratuberculosis (strain ATCC BAA-968 / K-10) (Mycobacterium paratuberculosis)).